A 466-amino-acid polypeptide reads, in one-letter code: Ras-GEF domain-containing family member 1C (466 aa).

The tract at residues 1 to 37 (MPQTLSASDMVTPGSLSPPPTEPTDGEQAGQPLLDGA) is disordered. The N-terminal Ras-GEF domain occupies 34–164 (LDGAPSSASL…LLQALHQKLA (131 aa)). The 247-residue stretch at 200 to 446 (DPYTLAQQLT…YLASYESESP (247 aa)) folds into the Ras-GEF domain.

Functionally, guanine nucleotide exchange factor (GEF). This is Ras-GEF domain-containing family member 1C (RASGEF1C) from Homo sapiens (Human).